The sequence spans 418 residues: Isocitrate dehydrogenase [NADP] (418 aa).

T106 lines the NADP(+) pocket. Residues S115, N117, R121, R131, and R155 each contribute to the D-threo-isocitrate site. Residue S115 is modified to Phosphoserine. Position 193 is a phosphothreonine (T193). Mg(2+) is bound at residue D309. Residues 341–347, N354, Y393, and R397 contribute to the NADP(+) site; that span reads HGTAPKY.

It belongs to the isocitrate and isopropylmalate dehydrogenases family. As to quaternary structure, homodimer. Mg(2+) is required as a cofactor. The cofactor is Mn(2+).

It localises to the secreted. It carries out the reaction D-threo-isocitrate + NADP(+) = 2-oxoglutarate + CO2 + NADPH. Catalyzes the oxidative decarboxylation of isocitrate to 2-oxoglutarate and carbon dioxide with the concomitant reduction of NADP(+). The protein is Isocitrate dehydrogenase [NADP] (icd) of Pseudomonas aeruginosa (strain UCBPP-PA14).